The chain runs to 501 residues: UPF0616 protein C1687.04 (501 aa).

Belongs to the UPF0616 family.

It is found in the cytoplasm. The protein localises to the nucleus. This is UPF0616 protein C1687.04 from Schizosaccharomyces pombe (strain 972 / ATCC 24843) (Fission yeast).